The sequence spans 58 residues: Large ribosomal subunit protein bL32 (58 aa).

It belongs to the bacterial ribosomal protein bL32 family.

The chain is Large ribosomal subunit protein bL32 from Anaplasma phagocytophilum (strain HZ).